The sequence spans 298 residues: Flavin-dependent thymidylate synthase (298 aa).

One can recognise a ThyX domain in the interval 41–251; it reads GFVRLVDYMG…PLTYAAFVEY (211 aa). FAD-binding positions include Thr87, 110–112, and Glu118; that span reads RHR. Residues 107–110, 118–122, and Arg190 contribute to the dUMP site; these read QWVR and EYSAR. The short motif at 110–120 is the ThyX motif element; that stretch reads RHRTANVNEYS. Residues 206-208 and His212 each bind FAD; that span reads DLH. Residue Arg217 coordinates dUMP. The Involved in ionization of N3 of dUMP, leading to its activation role is filled by Arg217.

Belongs to the thymidylate synthase ThyX family. As to quaternary structure, homotetramer. Requires FAD as cofactor.

The catalysed reaction is dUMP + (6R)-5,10-methylene-5,6,7,8-tetrahydrofolate + NADPH + H(+) = dTMP + (6S)-5,6,7,8-tetrahydrofolate + NADP(+). It participates in pyrimidine metabolism; dTTP biosynthesis. Functionally, catalyzes the reductive methylation of 2'-deoxyuridine-5'-monophosphate (dUMP) to 2'-deoxythymidine-5'-monophosphate (dTMP) while utilizing 5,10-methylenetetrahydrofolate (mTHF) as the methyl donor, and NADPH and FADH(2) as the reductant. This Ehrlichia ruminantium (strain Welgevonden) protein is Flavin-dependent thymidylate synthase.